Consider the following 314-residue polypeptide: Ribonuclease Z (314 aa).

The Zn(2+) site is built by His62, His64, Asp66, His67, His139, Asp210, and His268. The active-site Proton acceptor is the Asp66.

Belongs to the RNase Z family. Homodimer. Requires Zn(2+) as cofactor.

It carries out the reaction Endonucleolytic cleavage of RNA, removing extra 3' nucleotides from tRNA precursor, generating 3' termini of tRNAs. A 3'-hydroxy group is left at the tRNA terminus and a 5'-phosphoryl group is left at the trailer molecule.. Its function is as follows. Zinc phosphodiesterase, which displays some tRNA 3'-processing endonuclease activity. Probably involved in tRNA maturation, by removing a 3'-trailer from precursor tRNA. This is Ribonuclease Z from Acaryochloris marina (strain MBIC 11017).